Consider the following 100-residue polypeptide: NADH-quinone oxidoreductase subunit K (100 aa).

3 helical membrane passes run 1 to 21 (MIGL…GLAG), 28 to 48 (ILLL…GFIA), and 64 to 84 (FIIA…ILWF).

It belongs to the complex I subunit 4L family. In terms of assembly, NDH-1 is composed of 14 different subunits. Subunits NuoA, H, J, K, L, M, N constitute the membrane sector of the complex.

Its subcellular location is the cell inner membrane. It catalyses the reaction a quinone + NADH + 5 H(+)(in) = a quinol + NAD(+) + 4 H(+)(out). NDH-1 shuttles electrons from NADH, via FMN and iron-sulfur (Fe-S) centers, to quinones in the respiratory chain. The immediate electron acceptor for the enzyme in this species is believed to be ubiquinone. Couples the redox reaction to proton translocation (for every two electrons transferred, four hydrogen ions are translocated across the cytoplasmic membrane), and thus conserves the redox energy in a proton gradient. The polypeptide is NADH-quinone oxidoreductase subunit K (Helicobacter acinonychis (strain Sheeba)).